A 316-amino-acid polypeptide reads, in one-letter code: F-box protein At4g09920 (316 aa).

Residues 1–47 (MDRIIGLPDEVLVKILSFVPTKVAVSTSILSKRWEFLWMWLTKLKFG) enclose the F-box domain.

The polypeptide is F-box protein At4g09920 (Arabidopsis thaliana (Mouse-ear cress)).